A 928-amino-acid polypeptide reads, in one-letter code: Protein Niban 1 (928 aa).

The N-myristoyl glycine moiety is linked to residue Gly2. A phosphoserine mark is found at Ser579, Ser582, Ser596, Ser602, and Ser646. A compositionally biased stretch (polar residues) spans 580 to 596 (VSSLTDLKPPTGSNQAS). Residues 580–600 (VSSLTDLKPPTGSNQASPARR) form a disordered region. Disordered regions lie at residues 618 to 654 (VFQE…GTEQ) and 669 to 707 (ATED…TASG). The segment covering 690–701 (LEDEEPAQEEPE) has biased composition (acidic residues). At Ser708 the chain carries Phosphoserine. Disordered stretches follow at residues 723 to 877 (PVDS…ATAS) and 899 to 928 (PNPD…PSEE). The span at 801 to 818 (GGLTEEPLGPMEGELPGE) shows a compositional bias: low complexity. Basic and acidic residues predominate over residues 825-834 (HEGRGGKCTE). A compositionally biased stretch (low complexity) spans 865–877 (MGGQSSAAQATAS). Basic and acidic residues predominate over residues 905-915 (LSHKDDVKEGE). Phosphoserine is present on Ser926.

Belongs to the Niban family. As to expression, expressed in various types of thyroid tumor such as papillary thyroid carcinomas and oxyphilic thyroid tumors but not in normal thyroid tissue (at protein level). Strongly expressed in heart, skeletal muscle, pancreas, white blood cells and prostate with moderate expression in colon and spleen. Expressed in renal carcinoma cells but not in normal kidney.

It is found in the cytoplasm. It localises to the membrane. Regulates phosphorylation of a number of proteins involved in translation regulation including EIF2A, EIF4EBP1 and RPS6KB1. May be involved in the endoplasmic reticulum stress response. This Homo sapiens (Human) protein is Protein Niban 1.